Reading from the N-terminus, the 137-residue chain is ATP synthase epsilon chain (137 aa).

This sequence belongs to the ATPase epsilon chain family. In terms of assembly, F-type ATPases have 2 components, CF(1) - the catalytic core - and CF(0) - the membrane proton channel. CF(1) has five subunits: alpha(3), beta(3), gamma(1), delta(1), epsilon(1). CF(0) has three main subunits: a, b and c.

It localises to the cell membrane. In terms of biological role, produces ATP from ADP in the presence of a proton gradient across the membrane. The protein is ATP synthase epsilon chain of Caldicellulosiruptor saccharolyticus (strain ATCC 43494 / DSM 8903 / Tp8T 6331).